Consider the following 445-residue polypeptide: Alpha-1,3-mannosyl-glycoprotein 2-beta-N-acetylglucosaminyltransferase (445 aa).

Residues 1 to 6 (MLKKQS) are Cytoplasmic-facing. A helical; Signal-anchor for type II membrane protein membrane pass occupies residues 7 to 29 (AGLVLWGAILFVAWNALLLLFFW). The Lumenal portion of the chain corresponds to 30–445 (TRPAPGRPPS…TWEGYDPSWN (416 aa)). Cys-113 and Cys-143 are joined by a disulfide. Substrate is bound by residues Arg-115, Asp-142, His-188, and Asp-210. Residue Asp-211 coordinates Mn(2+). A disulfide bond links Cys-237 and Cys-303. The Proton acceptor role is filled by Asp-289. Substrate is bound at residue Ser-320.

The protein belongs to the glycosyltransferase 13 family. As to quaternary structure, interacts with MGAT4D. Interacts with BRI3 (isoforms 1 and 2); the interaction with isoform 2 is weaker than with isoform 1. Mn(2+) is required as a cofactor.

It localises to the golgi apparatus membrane. The protein resides in the cytoplasm. Its subcellular location is the perinuclear region. It carries out the reaction N(4)-(alpha-D-Man-(1-&gt;3)-[alpha-D-Man-(1-&gt;3)-[alpha-D-Man-(1-&gt;6)]-alpha-D-Man-(1-&gt;6)]-beta-D-Man-(1-&gt;4)-beta-D-GlcNAc-(1-&gt;4)-beta-D-GlcNAc)-L-asparaginyl-[protein] (N-glucan mannose isomer 5A1,2) + UDP-N-acetyl-alpha-D-glucosamine = N(4)-{beta-D-GlcNAc-(1-&gt;2)-alpha-D-Man-(1-&gt;3)-[alpha-D-Man-(1-&gt;3)-[alpha-D-Man-(1-&gt;6)]-alpha-D-Man-(1-&gt;6)]-beta-D-Man-(1-&gt;4)-beta-D-GlcNAc-(1-&gt;4)-beta-D-GlcNAc}-L-asparaginyl-[protein] + UDP + H(+). It functions in the pathway protein modification; protein glycosylation. Its function is as follows. Initiates complex N-linked carbohydrate formation. Essential for the conversion of high-mannose to hybrid and complex N-glycans. The chain is Alpha-1,3-mannosyl-glycoprotein 2-beta-N-acetylglucosaminyltransferase (MGAT1) from Homo sapiens (Human).